A 197-amino-acid chain; its full sequence is Small ribosomal subunit protein uS4y (197 aa).

Residues 109–183 enclose the S4 RNA-binding domain; that stretch reads RRLQTIVFKS…VKRRNERAGA (75 aa). The disordered stretch occupies residues 161–197; it reads SLTSPFGGGRPGRVKRRNERAGAKKASGGDGDEDDEE.

The protein belongs to the universal ribosomal protein uS4 family. As to quaternary structure, binds to the translation initiation factors TIF3E1.

This chain is Small ribosomal subunit protein uS4y (RPS9C), found in Arabidopsis thaliana (Mouse-ear cress).